A 715-amino-acid chain; its full sequence is Palmitoyltransferase ZDHHC5 (715 aa).

The Cytoplasmic portion of the chain corresponds to 1-13 (MPAESGKRFKPSK). A helical transmembrane segment spans residues 14–34 (YVPVSAAAIFLVGATTLFFAF). The Extracellular segment spans residues 35-52 (TCPGLSLNVSPAVPIYNA). The helical transmembrane segment at 53 to 73 (IMFLFVLANFSMATFMDPGIF) threads the bilayer. The Cytoplasmic portion of the chain corresponds to 74–148 (PRAEEDEDKE…NCIGRRNYRY (75 aa)). The residue at position 91 (tyrosine 91) is a Phosphotyrosine. One can recognise a DHHC domain in the interval 104 to 154 (KWCATCRFYRPPRCSHCSVCDNCVEEFDHHCPWVNNCIGRRNYRYFFLFLL). Cysteine 134 acts as the S-palmitoyl cysteine intermediate in catalysis. Residues 149 to 169 (FFLFLLSLTAHIMGVFGFGLL) traverse the membrane as a helical segment. At 170-191 (YVLYHIEELSGVRTAVTMAVMC) the chain is on the extracellular side. Residues 192–212 (VAGLFFIPVAGLTGFHVVLVA) form a helical membrane-spanning segment. The Cytoplasmic segment spans residues 213 to 715 (RGRTTNEQVT…VGGTTYEISV (503 aa)). At serine 247 the chain carries Phosphoserine. The interval 289–715 (GELRRTKSKG…VGGTTYEISV (427 aa)) is disordered. Position 294 is a phosphothreonine (threonine 294). 2 positions are modified to phosphoserine: serine 296 and serine 299. A Phosphothreonine modification is found at threonine 303. Position 345 is a phosphoserine (serine 345). A phosphothreonine mark is found at threonine 348 and threonine 350. The segment covering 359-373 (SSSSTSAAMPHSSSA) has biased composition (low complexity). Phosphoserine is present on residues serine 380, serine 398, serine 406, and serine 409. Phosphothreonine is present on threonine 411. Phosphoserine is present on residues serine 415, serine 425, serine 429, and serine 432. Over residues 422-432 (SSGSRSSSLKS) the composition is skewed to low complexity. A Phosphothreonine modification is found at threonine 436. The segment covering 442–478 (QLQSIRSEGTTSTSYKSLANQTRNGSLSYDSLLTPSD) has biased composition (polar residues). Serine 529 and serine 554 each carry phosphoserine. Low complexity predominate over residues 581–597 (PRTSSSSDDSKRSPLSK). Arginine 617 carries the post-translational modification Omega-N-methylarginine. Serine 621 is subject to Phosphoserine. At threonine 659 the chain carries Phosphothreonine. Residues 666-677 (LKTTYSKSNGQP) are compositionally biased toward polar residues. Phosphoserine occurs at positions 684 and 694. Arginine 697 is modified (omega-N-methylarginine).

Belongs to the DHHC palmitoyltransferase family. ERF2/ZDHHC9 subfamily. In terms of processing, phosphorylation regulates association with endocytic proteins and its subcellular localization. Phosphorylation by LYN during fatty acid uptake leads to inactivation of the activity. Autopalmitoylated. Palmitoylation of the C-terminal tail regulates stimulation-dependent plasma membrane motility. In terms of tissue distribution, highly enriched in brain, detectable in liver and heart, and undetectable in most other tissues.

It is found in the cell membrane. It carries out the reaction L-cysteinyl-[protein] + hexadecanoyl-CoA = S-hexadecanoyl-L-cysteinyl-[protein] + CoA. Its function is as follows. Palmitoyltransferase that catalyzes the addition of palmitate onto various protein substrates such as CTNND2, CD36, GSDMD, NLRP3, NOD1, NOD2, STAT3 and S1PR1 thus plays a role in various biological processes including cell adhesion, inflammation, fatty acid uptake, bacterial sensing or cardiac functions. Plays an important role in the regulation of synapse efficacy by mediating palmitoylation of delta-catenin/CTNND2, thereby increasing synaptic delivery and surface stabilization of alpha-amino-3-hydroxy-5-methyl-4-isoxazole propionic acid receptors (AMPARs). Under basal conditions, remains at the synaptic membrane through FYN-mediated phosphorylation that prevents association with endocytic proteins. Neuronal activity enhances the internalization and trafficking of DHHC5 from spines to dendritic shafts where it palmitoylates delta-catenin/CTNND2. Regulates cell adhesion at the plasma membrane by palmitoylating GOLGA7B and DSG2. Plays a role in innate immune response by mediating the palmitoylation of NOD1 and NOD2 and their proper recruitment to the bacterial entry site and phagosomes. Also participates in fatty acid uptake by palmitoylating CD36 and thereby targeting it to the plasma membrane. Upon binding of fatty acids to CD36, gets phosphorylated by LYN leading to inactivation and subsequent CD36 caveolar endocytosis. Controls oligodendrocyte development by catalyzing STAT3 palmitoylation. Acts as a regulator of inflammatory response by mediating palmitoylation of NLRP3 and GSDMD. Palmitoylates NLRP3 to promote inflammasome assembly and activation. Activates pyroptosis by catalyzing palmitoylation of gasdermin-D (GSDMD), thereby promoting membrane translocation and pore formation of GSDMD. This chain is Palmitoyltransferase ZDHHC5 (Zdhhc5), found in Mus musculus (Mouse).